The following is a 155-amino-acid chain: Large ribosomal subunit protein uL15 (155 aa).

Positions 1–63 are disordered; that stretch reads MKLHELAPNP…QMPLTRRLPK (63 aa). 2 stretches are compositionally biased toward gly residues: residues 21–31 and 42–52; these read RGIGSGLGKTS and SGGGVRPGFEG.

This sequence belongs to the universal ribosomal protein uL15 family. As to quaternary structure, part of the 50S ribosomal subunit.

Its function is as follows. Binds to the 23S rRNA. The chain is Large ribosomal subunit protein uL15 from Symbiobacterium thermophilum (strain DSM 24528 / JCM 14929 / IAM 14863 / T).